The chain runs to 561 residues: DNA ligase B (561 aa).

Lys-128 acts as the N6-AMP-lysine intermediate in catalysis.

This sequence belongs to the NAD-dependent DNA ligase family. LigB subfamily.

It carries out the reaction NAD(+) + (deoxyribonucleotide)n-3'-hydroxyl + 5'-phospho-(deoxyribonucleotide)m = (deoxyribonucleotide)n+m + AMP + beta-nicotinamide D-nucleotide.. In terms of biological role, catalyzes the formation of phosphodiester linkages between 5'-phosphoryl and 3'-hydroxyl groups in double-stranded DNA using NAD as a coenzyme and as the energy source for the reaction. This is DNA ligase B from Pseudomonas syringae pv. tomato (strain ATCC BAA-871 / DC3000).